A 305-amino-acid polypeptide reads, in one-letter code: Deoxyribonuclease gamma (305 aa).

Positions 1–20 (MSRELAPLLLLLLSIHSALA) are cleaved as a signal peptide. Residues 35 to 51 (KQEDKNAMDVIVKVIKR) carry the Bipartite nuclear localization signal motif. Active-site residues include E100 and H155. A disulfide bridge connects residues C194 and C231. The not required for free DNA-nuclease activity but required for activity towards liposome-coated DNA stretch occupies residues 284–305 (SRAFTNSKKSVTLRKKTKSKRS). A Nuclear localization signal motif is present at residues 296–304 (LRKKTKSKR).

Belongs to the DNase I family. The cofactor is Ca(2+). Mg(2+) serves as cofactor. In terms of processing, poly-ADP-ribosylated by PARP1. ADP-ribosylation negatively regulates enzymatic activity during apoptosis. Liver and spleen.

It is found in the nucleus. It localises to the endoplasmic reticulum. Its subcellular location is the secreted. With respect to regulation, inhibited by zinc. Its function is as follows. Has DNA hydrolytic activity. Is capable of both single- and double-stranded DNA cleavage, producing DNA fragments with 3'-OH ends. Can cleave chromatin to nucleosomal units and cleaves nucleosomal and liposome-coated DNA. Acts in internucleosomal DNA fragmentation (INDF) during apoptosis and necrosis. The role in apoptosis includes myogenic and neuronal differentiation, and BCR-mediated clonal deletion of self-reactive B cells. Is active on chromatin in apoptotic cell-derived membrane-coated microparticles and thus suppresses anti-DNA autoimmunity. Together with DNASE1, plays a key role in degrading neutrophil extracellular traps (NETs). NETs are mainly composed of DNA fibers and are released by neutrophils to bind pathogens during inflammation. Degradation of intravascular NETs by DNASE1 and DNASE1L3 is required to prevent formation of clots that obstruct blood vessels and cause organ damage following inflammation. This chain is Deoxyribonuclease gamma, found in Homo sapiens (Human).